We begin with the raw amino-acid sequence, 256 residues long: Imidazole glycerol phosphate synthase subunit hisF1 (256 aa).

Residues aspartate 11 and aspartate 130 contribute to the active site.

Belongs to the HisA/HisF family. As to quaternary structure, heterodimer of HisH and HisF.

It localises to the cytoplasm. The enzyme catalyses 5-[(5-phospho-1-deoxy-D-ribulos-1-ylimino)methylamino]-1-(5-phospho-beta-D-ribosyl)imidazole-4-carboxamide + L-glutamine = D-erythro-1-(imidazol-4-yl)glycerol 3-phosphate + 5-amino-1-(5-phospho-beta-D-ribosyl)imidazole-4-carboxamide + L-glutamate + H(+). It functions in the pathway amino-acid biosynthesis; L-histidine biosynthesis; L-histidine from 5-phospho-alpha-D-ribose 1-diphosphate: step 5/9. IGPS catalyzes the conversion of PRFAR and glutamine to IGP, AICAR and glutamate. The HisF subunit catalyzes the cyclization activity that produces IGP and AICAR from PRFAR using the ammonia provided by the HisH subunit. This chain is Imidazole glycerol phosphate synthase subunit hisF1 (hisF1), found in Parasynechococcus marenigrum (strain WH8102).